The chain runs to 706 residues: F-box/WD repeat-containing protein 7 (706 aa).

The segment at 1–157 is disordered; the sequence is MNQELLSVGS…IVDLPIHQRS (157 aa). Ser26 bears the Phosphoserine mark. The segment covering 32–54 has biased composition (basic and acidic residues); sequence QMNRVLEEEQQQPRHQEEEHAAR. A compositionally biased stretch (polar residues) spans 69–83; that stretch reads NDPQQGQLEENNNRF. The span at 86–128 shows a compositional bias: acidic residues; sequence VDEDSSGNQEEQEEDEEHAGEQDEEDEEEEEMDQESDDFDQSD. Over residues 129–138 the composition is skewed to basic and acidic residues; it reads DSSREDEHTH. Thr204 carries the post-translational modification Phosphothreonine. Ser226 is subject to Phosphoserine. The F-box domain occupies 277 to 323; it reads RDFISLLPKELALYVLSFLEPKDLLQAAQTCRYWRILAEDNLLWREK. WD repeat units lie at residues 377–417, 419–455, 458–497, 499–535, 538–577, 579–617, and 621–658; these read GHDD…RTLV, HTGG…CIHT, GHTS…HVLM, HVAA…CLHT, GHTN…HTLT, HQSL…QTLQ, and KHQS…FIRN.

Homodimer; homodimerization plays a role in substrate binding and/or ubiquitination and degradation. Component of the SCF(FBXW7) complex consisting of CUL1, RBX1, SKP1 and FBXW7. Interacts (via F-box domain) with SKP1. Interacts (via F-box domain) with pseudophosphatase STYX; the interaction is direct and prevents FBXW7 interaction with SKP1. Interacts with cyclin-E (CCNE1 or CCNE2). Interacts with PSEN1. Forms a trimeric complex with NOTCH1 and SGK1. Interacts with NOTCH1 intracellular domain/NICD and NOTCH4 intracellular domain/NICD. Interacts with NOTCH2 intracellular domain (N2ICD). Interacts with MYC (when phosphorylated). Interacts with USP28, counteracting ubiquitination of MYC. Interacts with JUN. Found in a complex with JUN and PRR7. Interacts with JUN and PRR7; the interaction inhibits ubiquitination-mediated JUN degradation, promoting its phosphorylation and transcriptional activity. Interacts (when phosphorylated at Thr-204) with PIN1, disrupting FBXW7 dimerization and promoting FBXW7 autoubiquitination and degradation. Interacts with UBE2QL1. Interacts with FAM83D; promotes FBXW7 degradation. Interacts with MYCN; FBXW7 competes with AURKA for binding to unphosphorylated MYCN but not for binding to phosphorylated MYCN. Interacts with STOML1. Interacts with NFE2L1. Interacts with USP36, counteracting ubiquitination of MYC. Interacts with RICTOR; mediates RICTOR ubiquitination and degradation.l Interacts with USP38, counteracting ubiquitination of MYC. As to quaternary structure, (Microbial infection) In case of infection, interacts with T.annulata PIN1 (TaPIN1); leading to FBXW7 autoubiquitination and subsequent degradation: FBXW7 degradation promotes stabilization of JUN, which promotes cell transformation. Post-translationally, phosphorylation at Thr-204 promotes interaction with PIN1, leading to disrupt FBXW7 dimerization and promoting FBXW7 autoubiquitination and degradation. Phosphorylated by ATM at Ser-26 in response to DNA damage, promoting recruitment to DNA damage sites and 'Lys-63'-linked ubiquitination of phosphorylated XRCC4. Ubiquitinated: autoubiquitinates following phosphorylation at Thr-204 and subsequent interaction with PIN1. Ubiquitination leads to its degradation.

The protein resides in the nucleus. The protein localises to the nucleoplasm. It localises to the chromosome. The protein operates within protein modification; protein ubiquitination. Substrate recognition component of a SCF (SKP1-CUL1-F-box protein) E3 ubiquitin-protein ligase complex which mediates the ubiquitination and subsequent proteasomal degradation of target proteins. Recognizes and binds phosphorylated sites/phosphodegrons within target proteins and thereafter brings them to the SCF complex for ubiquitination. Identified substrates include cyclin-E (CCNE1 or CCNE2), DISC1, JUN, MYC, NOTCH1 released notch intracellular domain (NICD), NOTCH2, MCL1, MLST8, RICTOR, and probably PSEN1. Acts as a negative regulator of JNK signaling by binding to phosphorylated JUN and promoting its ubiquitination and subsequent degradation. SCF(FBXW7) complex mediates the ubiquitination and subsequent degradation of NFE2L1. Involved in bone homeostasis and negative regulation of osteoclast differentiation. Also able to promote 'Lys-63'-linked ubiquitination in response to DNA damage. The SCF(FBXW7) complex facilitates double-strand break repair following phosphorylation by ATM: phosphorylation promotes localization to sites of double-strand breaks and 'Lys-63'-linked ubiquitination of phosphorylated XRCC4, enhancing DNA non-homologous end joining. The sequence is that of F-box/WD repeat-containing protein 7 from Bos taurus (Bovine).